Here is an 853-residue protein sequence, read N- to C-terminus: DNA mismatch repair protein MutS (853 aa).

Position 613 to 620 (613 to 620 (GPNMGGKS)) interacts with ATP.

This sequence belongs to the DNA mismatch repair MutS family.

Functionally, this protein is involved in the repair of mismatches in DNA. It is possible that it carries out the mismatch recognition step. This protein has a weak ATPase activity. In Vibrio atlanticus (strain LGP32) (Vibrio splendidus (strain Mel32)), this protein is DNA mismatch repair protein MutS.